A 616-amino-acid chain; its full sequence is Glutamine--fructose-6-phosphate aminotransferase [isomerizing] (616 aa).

Catalysis depends on Cys2, which acts as the Nucleophile; for GATase activity. Residues 2–221 (CGIVGYVGTD…QDQIVTITPE (220 aa)) form the Glutamine amidotransferase type-2 domain. 2 SIS domains span residues 288-428 (LGDE…VRGT) and 461-606 (LAHW…VDQP). Lys611 (for Fru-6P isomerization activity) is an active-site residue.

Homodimer.

It is found in the cytoplasm. The enzyme catalyses D-fructose 6-phosphate + L-glutamine = D-glucosamine 6-phosphate + L-glutamate. Catalyzes the first step in hexosamine metabolism, converting fructose-6P into glucosamine-6P using glutamine as a nitrogen source. This Leifsonia xyli subsp. xyli (strain CTCB07) protein is Glutamine--fructose-6-phosphate aminotransferase [isomerizing].